A 37-amino-acid chain; its full sequence is Large ribosomal subunit protein bL36 (37 aa).

Belongs to the bacterial ribosomal protein bL36 family.

This is Large ribosomal subunit protein bL36 from Tropheryma whipplei (strain Twist) (Whipple's bacillus).